A 414-amino-acid polypeptide reads, in one-letter code: Esterase FrsA (414 aa).

It belongs to the FrsA family.

It carries out the reaction a carboxylic ester + H2O = an alcohol + a carboxylate + H(+). Catalyzes the hydrolysis of esters. The sequence is that of Esterase FrsA from Salmonella agona (strain SL483).